A 162-amino-acid chain; its full sequence is uncharacterized protein (162 aa).

Belongs to the LOR family.

This is an uncharacterized protein from Bacillus subtilis (strain 168).